We begin with the raw amino-acid sequence, 410 residues long: Imidazolonepropionase (410 aa).

Fe(3+)-binding residues include H71 and H73. 2 residues coordinate Zn(2+): H71 and H73. 4-imidazolone-5-propanoate is bound by residues R80, Y143, and H175. Y143 contributes to the N-formimidoyl-L-glutamate binding site. A Fe(3+)-binding site is contributed by H235. H235 contributes to the Zn(2+) binding site. Residue E238 coordinates 4-imidazolone-5-propanoate. A Fe(3+)-binding site is contributed by D309. Position 309 (D309) interacts with Zn(2+).

It belongs to the metallo-dependent hydrolases superfamily. HutI family. Requires Zn(2+) as cofactor. The cofactor is Fe(3+).

It localises to the cytoplasm. It catalyses the reaction 4-imidazolone-5-propanoate + H2O = N-formimidoyl-L-glutamate. The protein operates within amino-acid degradation; L-histidine degradation into L-glutamate; N-formimidoyl-L-glutamate from L-histidine: step 3/3. In terms of biological role, catalyzes the hydrolytic cleavage of the carbon-nitrogen bond in imidazolone-5-propanoate to yield N-formimidoyl-L-glutamate. It is the third step in the universal histidine degradation pathway. The polypeptide is Imidazolonepropionase (Thermoplasma acidophilum (strain ATCC 25905 / DSM 1728 / JCM 9062 / NBRC 15155 / AMRC-C165)).